Reading from the N-terminus, the 308-residue chain is Glutamyl-Q tRNA(Asp) synthetase (308 aa).

L-glutamate-binding positions include Arg-19–Ser-23 and Glu-55. A 'HIGH' region motif is present at residues Pro-22 to Ser-32. Zn(2+) is bound by residues Cys-111, Cys-113, Tyr-125, and Cys-129. L-glutamate-binding residues include Tyr-182 and Arg-200. Positions Lys-238–Gln-242 match the 'KMSKS' region motif. ATP is bound at residue Lys-241.

It belongs to the class-I aminoacyl-tRNA synthetase family. GluQ subfamily. Zn(2+) is required as a cofactor.

Catalyzes the tRNA-independent activation of glutamate in presence of ATP and the subsequent transfer of glutamate onto a tRNA(Asp). Glutamate is transferred on the 2-amino-5-(4,5-dihydroxy-2-cyclopenten-1-yl) moiety of the queuosine in the wobble position of the QUC anticodon. The protein is Glutamyl-Q tRNA(Asp) synthetase of Shigella flexneri.